We begin with the raw amino-acid sequence, 734 residues long: Adhesion G protein-coupled receptor E5 (734 aa).

An N-terminal signal peptide occupies residues 1–26 (MGGPHGGPFLLFHVLCFLLTLSEVGS). Over 27 to 449 (QNSKACALPC…VEDPKLALIT (423 aa)) the chain is Extracellular. The EGF-like 1 domain occupies 28 to 70 (NSKACALPCPPNSSCVNGTACRCAPGFISFSGEIFTDPLESCD). Intrachain disulfides connect Cys32–Cys42, Cys36–Cys48, Cys50–Cys69, Cys75–Cys89, Cys83–Cys98, Cys100–Cys121, Cys127–Cys140, Cys134–Cys149, and Cys151–Cys170. Asn39 and Asn44 each carry an N-linked (GlcNAc...) asparagine glycan. An EGF-like 2; calcium-binding domain is found at 71–122 (DINECGPPSPVDCGSSADCQNTEGGYYCTCSPGYEPVSGAMIFRNESENTCR). 2 N-linked (GlcNAc...) asparagine glycosylation sites follow: Asn115 and Asn136. In terms of domain architecture, EGF-like 3; calcium-binding spans 123–171 (DVDECSSGQHQCHNSTVCFNTVGSYTCHCREGWEPKHGLKNKQKDTICK). A GAIN-B domain is found at 265 to 441 (TYRSLDNTEL…AILMAHYDVE (177 aa)). Residues Asn285, Asn327, Asn372, Asn403, and Asn418 are each glycosylated (N-linked (GlcNAc...) asparagine). 2 disulfides stabilise this stretch: Cys393–Cys423 and Cys411–Cys425. The interval 393 to 441 (CAFWKKDSNGNGSWATTGCWKMGRGNGSITCQCSHLSSFAILMAHYDVE) is GPS. A helical membrane pass occupies residues 450-470 (KVGLALSLACLLLCILTFLLV). At 471 to 478 (RPIQGSRT) the chain is on the cytoplasmic side. A helical membrane pass occupies residues 479–499 (TVHLHLCICLFVGSAIFLAGI). The Extracellular portion of the chain corresponds to 500 to 519 (ENEGGEVGTRCRLVAVLLHY). A helical membrane pass occupies residues 520 to 540 (CFLAAFCWMSLEGVELYFLVV). Residues 541–550 (RVFQGQGMRK) are Cytoplasmic-facing. Residues 551 to 571 (LWLCLIGYGVPLIIVGISAGA) traverse the membrane as a helical segment. At 572–593 (YSKGYGREKFCWLNFEGGFLWS) the chain is on the extracellular side. A helical membrane pass occupies residues 594 to 614 (FVGPVTFIVLGNAIIFVITVW). Over 615 to 637 (KLTQKFSEINPDIKKLKKARVLT) the chain is Cytoplasmic. Residues 638 to 658 (ITAIAQLFVLGCTWVFGLLLF) traverse the membrane as a helical segment. Residues 659–662 (NPES) lie on the Extracellular side of the membrane. Residues 663 to 683 (WVLSYIFSILNCLQGFFLFVL) traverse the membrane as a helical segment. The Cytoplasmic portion of the chain corresponds to 684–734 (YCLLNKKVREEYRKWACMVAGNKYSEFATTTSGSGSSHNQTQALRPSESGM). The disordered stretch occupies residues 712-734 (TTTSGSGSSHNQTQALRPSESGM). Position 713 is a phosphothreonine (Thr713). Ser715 is modified (phosphoserine). Phosphothreonine is present on Thr724. Phosphoserine occurs at positions 730 and 732.

Belongs to the G-protein coupled receptor 2 family. LN-TM7 subfamily. As to quaternary structure, forms a heterodimer, consisting of a large extracellular region (alpha subunit) non-covalently linked to a seven-transmembrane moiety (beta subunit). Interacts with complement decay-accelerating factor (DAF) and with chondroitin sulfate. Post-translationally, proteolytically cleaved into 2 subunits, an extracellular alpha subunit and a seven-transmembrane subunit.

Its subcellular location is the cell membrane. It localises to the secreted. It is found in the extracellular space. In terms of biological role, receptor potentially involved in both adhesion and signaling processes early after leukocyte activation. Plays an essential role in leukocyte migration. This chain is Adhesion G protein-coupled receptor E5, found in Bos taurus (Bovine).